The following is a 302-amino-acid chain: MNSRHPSAPYRGRFAPSPTGPLHLGSLYTAVVGFCEARRRGGAWLVRIDDADRQRCRQTHADSILRTLETHGLWWDEAVLFQSLRDEIYRVALERLAAGSRVFPCTCPRRELAGSGPIYSGRCRARYPHPPAGEHALRLRVGDAVIGFDDRLQGRIEQDLGSAVGDFVVRRRDGLPAYHLATVIDDAEQRVTEVLRGVDLLDSTPRQILLQECLGLPRPDYCHIPVLTDRGGIKLSKQAGARPVDEDAPSENLWTVLALLGFVPEPPLIGAKPAEILDWAVAHWDIRRLPPGRRIDVGGLAV.

Residues 13–17 (RFAPS) and Asp49 contribute to the L-glutamate site. A 'HIGH' region motif is present at residues 16–26 (PSPTGPLHLGS). Cys105, Cys107, Tyr119, and Cys123 together coordinate Zn(2+). Residues Tyr178 and Arg196 each contribute to the L-glutamate site. Residues 234 to 238 (KLSKQ) carry the 'KMSKS' region motif. Lys237 is an ATP binding site.

It belongs to the class-I aminoacyl-tRNA synthetase family. GluQ subfamily. It depends on Zn(2+) as a cofactor.

Its function is as follows. Catalyzes the tRNA-independent activation of glutamate in presence of ATP and the subsequent transfer of glutamate onto a tRNA(Asp). Glutamate is transferred on the 2-amino-5-(4,5-dihydroxy-2-cyclopenten-1-yl) moiety of the queuosine in the wobble position of the QUC anticodon. The polypeptide is Glutamyl-Q tRNA(Asp) synthetase (Methylococcus capsulatus (strain ATCC 33009 / NCIMB 11132 / Bath)).